Here is a 359-residue protein sequence, read N- to C-terminus: MSMNNSKQLVSPAAALLSNTTCQTENRLSVFFSVIFMTVGILSNSLAIAILMKAYQRFRQKSKASFLLLASGLVITDFFGHLINGAIAVFVYASDKEWIRFDQSNVLCSIFGICMVFSGLCPLLLGSVMAIERCIGVTKPIFHSTKITSKHVKMMLSGVCLFAVFIALLPILGHRDYKIQASRTWCFYNTEDIKDWEDRFYLLLFSFLGLLALGVSLLCNAITGITLLRVKFKSQQHRQGRSHHLEMVIQLLAIMCVSCICWSPFLVTMANIGINGNHSLETCETTLFALRMATWNQILDPWVYILLRKAVLKNLYKLASQCCGVHVISLHIWELSSIKNSLKVAAISESPVAEKSAST.

Topologically, residues 1 to 31 are extracellular; that stretch reads MSMNNSKQLVSPAAALLSNTTCQTENRLSVF. Residues Asn-4 and Asn-19 are each glycosylated (N-linked (GlcNAc...) asparagine). The chain crosses the membrane as a helical span at residues 32-54; sequence FSVIFMTVGILSNSLAIAILMKA. Residues 55-69 are Cytoplasmic-facing; that stretch reads YQRFRQKSKASFLLL. Residues 70 to 90 form a helical membrane-spanning segment; the sequence is ASGLVITDFFGHLINGAIAVF. Topologically, residues 91–109 are extracellular; it reads VYASDKEWIRFDQSNVLCS. The cysteines at positions 108 and 186 are disulfide-linked. The chain crosses the membrane as a helical span at residues 110-131; it reads IFGICMVFSGLCPLLLGSVMAI. The Cytoplasmic segment spans residues 132–152; the sequence is ERCIGVTKPIFHSTKITSKHV. A helical transmembrane segment spans residues 153–175; the sequence is KMMLSGVCLFAVFIALLPILGHR. The Extracellular segment spans residues 176-198; the sequence is DYKIQASRTWCFYNTEDIKDWED. Residues 199–224 traverse the membrane as a helical segment; sequence RFYLLLFSFLGLLALGVSLLCNAITG. Residues 225 to 250 are Cytoplasmic-facing; sequence ITLLRVKFKSQQHRQGRSHHLEMVIQ. A helical transmembrane segment spans residues 251 to 267; it reads LLAIMCVSCICWSPFLV. Residues 268–285 are Extracellular-facing; the sequence is TMANIGINGNHSLETCET. The chain crosses the membrane as a helical span at residues 286-307; it reads TLFALRMATWNQILDPWVYILL. Residues 308–359 are Cytoplasmic-facing; the sequence is RKAVLKNLYKLASQCCGVHVISLHIWELSSIKNSLKVAAISESPVAEKSAST.

The protein belongs to the G-protein coupled receptor 1 family. Isoform 1 can form heterodimers with isoform 5 (and probably other isoforms). As to expression, eye.

It is found in the cell membrane. Receptor for prostaglandin F2-alpha (PGF2-alpha). The activity of this receptor is mediated by G proteins which activate a phosphatidylinositol-calcium second messenger system. Initiates luteolysis in the corpus luteum. Isoforms 2 to 7 do not bind PGF2-alpha but are proposed to modulate signaling by participating in variant receptor complexes; heterodimers between isoform 1 and isoform 5 are proposed to be a receptor for prostamides including the synthetic analog bimatoprost. This Homo sapiens (Human) protein is Prostaglandin F2-alpha receptor (PTGFR).